A 771-amino-acid polypeptide reads, in one-letter code: MNSLVKGISKVRSTRSFSTVSMSPLEPNKKLNYEGIDAKLKQFRLHHNKPLTLAEKIIYGHLEDPSTKVERGITYLKLHPDRVAMQDATAQMAVLQFMSAGLPETAVPTTIHCDHLIEAYKGGEKDLEVAKDINKEVYDFLSTSAKKFGMGFWKPGSGIIHQIVLENYAFPGGLMIGTDSHTPNAGGLGMVAVGVGGADAVDVMAGIPWELKAPKIIGVKLTGSLKGWSSPKDVILRVADILTVKGGTGAIVEYFGSGVESLSCTGMATICNMGAEIGATTSLFPFNKRMVDYLNSTGRSNIANAANSFKHNLVADPNAHYDQLIELNLDTLEPYINGPFTPDLGHPLSKFAESVKTNNWPAELKVGLIGSCTNSSYEDMSRSASVAQQALDKGITAKAKFTITPGSEQIRATIERDGQMKVLEKVGGVVLANACGPCIGQWKREDVPKGEKNSIITSYNRNFTGRNDSNVNTHAFVASPEIVTALTIAGDITFNPMTDFLTDKDGNKFKLTPPTGDELPSRGFDAGENTYQPPSPNGQNINVIVDSESSRLQLLQPFAPWDKKDLVDMQVLIKVQGKCTTDHISMAGPWLKYRGHLDNISNNMLIGAINSENGKANAVLNQFTGEIGPVPTVARDYKKRGVNWIVVGDENYGEGSSREHAALEPRHLGGKAILVKSFARIHETNLKKQGILPLTFANPSDYDKISGDDRISIIGLKDLAPGKQLTLIVKSAKQGSEFEIKANHTMNAGQIEWFKAGSALNYIKSEKAKKN.

Residues Q86 and 179–181 contribute to the substrate site; that span reads DSH. [4Fe-4S] cluster contacts are provided by C372, C435, and C438. Substrate-binding positions include R461, R466, R594, and 657–658; that span reads SR.

It belongs to the aconitase/IPM isomerase family. Monomer. [4Fe-4S] cluster serves as cofactor.

The protein resides in the mitochondrion. It catalyses the reaction citrate = D-threo-isocitrate. Its pathway is carbohydrate metabolism; tricarboxylic acid cycle; isocitrate from oxaloacetate: step 2/2. Its function is as follows. Catalyzes the isomerization of citrate to isocitrate via cis-aconitate. This Dictyostelium discoideum (Social amoeba) protein is Probable aconitate hydratase, mitochondrial (aco2).